The chain runs to 119 residues: Ribonuclease P protein component (119 aa).

The protein belongs to the RnpA family. Consists of a catalytic RNA component (M1 or rnpB) and a protein subunit.

The catalysed reaction is Endonucleolytic cleavage of RNA, removing 5'-extranucleotides from tRNA precursor.. RNaseP catalyzes the removal of the 5'-leader sequence from pre-tRNA to produce the mature 5'-terminus. It can also cleave other RNA substrates such as 4.5S RNA. The protein component plays an auxiliary but essential role in vivo by binding to the 5'-leader sequence and broadening the substrate specificity of the ribozyme. The polypeptide is Ribonuclease P protein component (Bacillus cereus (strain ATCC 14579 / DSM 31 / CCUG 7414 / JCM 2152 / NBRC 15305 / NCIMB 9373 / NCTC 2599 / NRRL B-3711)).